The primary structure comprises 688 residues: Elongation factor G (688 aa).

A tr-type G domain is found at 8–282; that stretch reads EKFRNFGIMA…GVVDYLPSPL (275 aa). GTP contacts are provided by residues 17–24, 81–85, and 135–138; these read AHIDAGKT, DTPGH, and NKMD.

Belongs to the TRAFAC class translation factor GTPase superfamily. Classic translation factor GTPase family. EF-G/EF-2 subfamily.

It is found in the cytoplasm. Its function is as follows. Catalyzes the GTP-dependent ribosomal translocation step during translation elongation. During this step, the ribosome changes from the pre-translocational (PRE) to the post-translocational (POST) state as the newly formed A-site-bound peptidyl-tRNA and P-site-bound deacylated tRNA move to the P and E sites, respectively. Catalyzes the coordinated movement of the two tRNA molecules, the mRNA and conformational changes in the ribosome. In Clostridium perfringens (strain ATCC 13124 / DSM 756 / JCM 1290 / NCIMB 6125 / NCTC 8237 / Type A), this protein is Elongation factor G.